A 611-amino-acid chain; its full sequence is Probable cysteine desulfurase 1 (611 aa).

The interval 1-208 is cargo-loading domain; the sequence is MRATQLYAAS…HEMVDVFDIQ (208 aa). Lys-428 bears the N6-(pyridoxal phosphate)lysine mark. Cys-566 functions as the Cysteine persulfide intermediate in the catalytic mechanism.

This sequence belongs to the class-V pyridoxal-phosphate-dependent aminotransferase family. Csd subfamily. There are 1-2 copies of this protein in each type 2A encapsulin shell. Requires pyridoxal 5'-phosphate as cofactor.

Its subcellular location is the encapsulin nanocompartment. The enzyme catalyses (sulfur carrier)-H + L-cysteine = (sulfur carrier)-SH + L-alanine. Cargo protein of a type 2A encapsulin nanocompartment involved in sulfur metabolism. Cysteine desulfurases mobilize the sulfur from L-cysteine to yield L-alanine, an essential step in sulfur metabolism for biosynthesis of a variety of sulfur-containing biomolecules. This is Probable cysteine desulfurase 1 from Mycobacterium leprae (strain TN).